The chain runs to 162 residues: MNIPFRVGQGFDVHALVEGRPLIIGGVTIAHTHGLLGHSDADVLLHAVTDALLGGAGLGDIGRHFPDTDPAYRGADSRVLLRAAFDKVRAAGWAPVNVDATIHAQAPKIGPHAAAMVANIAADLALDAGAVNIKAKTNEGLGYLGRKEGIAANVVVLLARAG.

A divalent metal cation is bound by residues D12 and H14. Residues 12–14 (DVH) and 38–39 (HS) each bind 4-CDP-2-C-methyl-D-erythritol 2-phosphate. H46 is an a divalent metal cation binding site. 4-CDP-2-C-methyl-D-erythritol 2-phosphate-binding positions include 60 to 62 (DIG), 65 to 69 (FPDTD), and R146.

It belongs to the IspF family. In terms of assembly, homotrimer. A divalent metal cation serves as cofactor.

The enzyme catalyses 4-CDP-2-C-methyl-D-erythritol 2-phosphate = 2-C-methyl-D-erythritol 2,4-cyclic diphosphate + CMP. Its pathway is isoprenoid biosynthesis; isopentenyl diphosphate biosynthesis via DXP pathway; isopentenyl diphosphate from 1-deoxy-D-xylulose 5-phosphate: step 4/6. In terms of biological role, involved in the biosynthesis of isopentenyl diphosphate (IPP) and dimethylallyl diphosphate (DMAPP), two major building blocks of isoprenoid compounds. Catalyzes the conversion of 4-diphosphocytidyl-2-C-methyl-D-erythritol 2-phosphate (CDP-ME2P) to 2-C-methyl-D-erythritol 2,4-cyclodiphosphate (ME-CPP) with a corresponding release of cytidine 5-monophosphate (CMP). This is 2-C-methyl-D-erythritol 2,4-cyclodiphosphate synthase from Bordetella parapertussis (strain 12822 / ATCC BAA-587 / NCTC 13253).